The sequence spans 798 residues: Nuclear cap-binding protein subunit 1 (798 aa).

In terms of domain architecture, MIF4G spans 28-241 (EKKLQGVIGK…SLSAQIEALR (214 aa)). The segment at 663 to 686 (NKIKEEDDEESDIKMDEDETKEEK) is disordered. Acidic residues predominate over residues 668–682 (EDDEESDIKMDEDET).

The protein belongs to the NCBP1 family. In terms of assembly, component of the nuclear cap-binding complex (CBC), a heterodimer composed of ncbp-1 and ncbp-1 that interacts with m7GpppG-capped RNA.

The protein localises to the nucleus. In terms of biological role, component of the cap-binding complex (CBC), which binds cotranscriptionally to the 5'-cap of pre-mRNAs and is involved in various processes such as pre-mRNA splicing and RNA-mediated gene silencing (RNAi). The CBC complex is involved in miRNA-mediated RNA interference and is required for primary microRNAs (miRNAs) processing. In the CBC complex, ncbp-1 does not bind directly capped RNAs (m7GpppG-capped RNA) but is required to stabilize the movement of the N-terminal loop of ncbp-2 and lock the CBC into a high affinity cap-binding state with the cap structure. This is Nuclear cap-binding protein subunit 1 (ncbp-1) from Caenorhabditis elegans.